The primary structure comprises 511 residues: MKKRALVSVSDKTGVVEFVKGLLEQGIEVISTGGTKKLLEENGLQVIGISEVTGFPEIMDGRVKTLHPNIHGGLLAVRDNETHVAQMNELGMEPIDFVIVNLYPFKETIAKPDVTFADAIENIDIGGPTMIRSAAKNHKFVSVIVDPVDYDVVLAELKENGEVKEETKRKLAAKVFRHTAAYDALISNYLTEQMGEENPETLTVTFEKKQDLRYGENPHQKATFYKAPFAVTSSVAYAEQLHGKELSYNNINDADAALSIVKEFTEPAVVAVKHMNPCGVGVGTDIHEAYTRAYEADPVSIFGGIIAANREIDKATAEKLHEIFLEIIIAPSFSKEALEVLQSKKNLRLLTVNIEKATSASKKLTSVQGGLLVQEEDTLSLDESTISIPTKREPSEQEWKDLKLAWKVVKHVKSNAIVLAKDDMTIGVGAGQMNRVGSAKIAITQAGEKAQGSALASDAFFPMPDTVEEAAKAGITAIIQPGGSIRDEDSIKVADTYGIAMVFTGVRHFKH.

The MGS-like domain maps to 1 to 145 (MKKRALVSVS…KNHKFVSVIV (145 aa)).

It belongs to the PurH family.

It carries out the reaction (6R)-10-formyltetrahydrofolate + 5-amino-1-(5-phospho-beta-D-ribosyl)imidazole-4-carboxamide = 5-formamido-1-(5-phospho-D-ribosyl)imidazole-4-carboxamide + (6S)-5,6,7,8-tetrahydrofolate. The enzyme catalyses IMP + H2O = 5-formamido-1-(5-phospho-D-ribosyl)imidazole-4-carboxamide. It functions in the pathway purine metabolism; IMP biosynthesis via de novo pathway; 5-formamido-1-(5-phospho-D-ribosyl)imidazole-4-carboxamide from 5-amino-1-(5-phospho-D-ribosyl)imidazole-4-carboxamide (10-formyl THF route): step 1/1. Its pathway is purine metabolism; IMP biosynthesis via de novo pathway; IMP from 5-formamido-1-(5-phospho-D-ribosyl)imidazole-4-carboxamide: step 1/1. This is Bifunctional purine biosynthesis protein PurH from Bacillus thuringiensis (strain Al Hakam).